The primary structure comprises 145 residues: Large ribosomal subunit protein uL15 (145 aa).

The segment at 1–58 is disordered; that stretch reads MFSLLKPKGAAKRRKIVGRGPGSGLGKTSGRGQKGQKARNTSPRLGFEGGQTPLYRRL. A compositionally biased stretch (gly residues) spans 19 to 33; that stretch reads RGPGSGLGKTSGRGQ.

Belongs to the universal ribosomal protein uL15 family. As to quaternary structure, part of the 50S ribosomal subunit.

Functionally, binds to the 23S rRNA. The polypeptide is Large ribosomal subunit protein uL15 (Borreliella afzelii (strain PKo) (Borrelia afzelii)).